The chain runs to 70 residues: Conotoxin Mr3.8 (70 aa).

Residues 1 to 24 form the signal peptide; the sequence is MLKMGVVLFIFLVLFPLATLQLDA. Positions 25 to 54 are excised as a propeptide; the sequence is DQPVERYAKNKQLFNPHKRRGIILRAPGKR. 3 disulfide bridges follow: C55-C67, C56-C68, and C61-C65.

Belongs to the conotoxin M superfamily. In terms of tissue distribution, expressed by the venom duct.

The protein localises to the secreted. Functionally, in vitro, inhibits proliferation of the mice ovarian cancer cells ID8. The polypeptide is Conotoxin Mr3.8 (Conus marmoreus (Marble cone)).